A 146-amino-acid chain; its full sequence is UPF0260 protein VP2169 (146 aa).

The protein belongs to the UPF0260 family.

This is UPF0260 protein VP2169 from Vibrio parahaemolyticus serotype O3:K6 (strain RIMD 2210633).